A 543-amino-acid chain; its full sequence is Probable protein kinase UbiB (543 aa).

In terms of domain architecture, Protein kinase spans 123–501; sequence DFDIVPLASA…KRQQAKGQFL (379 aa). ATP-binding positions include 129–137 and Lys152; that span reads LASASIAQV. The active-site Proton acceptor is Asp287. A helical membrane pass occupies residues 517-539; the sequence is TSNITALASISAATGVTFWLLSW.

This sequence belongs to the ABC1 family. UbiB subfamily.

The protein localises to the cell inner membrane. It participates in cofactor biosynthesis; ubiquinone biosynthesis [regulation]. Functionally, is probably a protein kinase regulator of UbiI activity which is involved in aerobic coenzyme Q (ubiquinone) biosynthesis. The polypeptide is Probable protein kinase UbiB (Aliivibrio salmonicida (strain LFI1238) (Vibrio salmonicida (strain LFI1238))).